The primary structure comprises 201 residues: Superoxide dismutase [Mn] (201 aa).

Mn(2+) contacts are provided by His-27, His-81, Asp-163, and His-167.

Belongs to the iron/manganese superoxide dismutase family. In terms of assembly, homodimer. Mn(2+) is required as a cofactor.

The protein localises to the secreted. The catalysed reaction is 2 superoxide + 2 H(+) = H2O2 + O2. Its function is as follows. Destroys superoxide anion radicals which are normally produced within the cells and which are toxic to biological systems. This Streptococcus pyogenes serotype M1 protein is Superoxide dismutase [Mn] (sodA).